Here is a 75-residue protein sequence, read N- to C-terminus: UPF0346 protein LSL_0716 (75 aa).

Belongs to the UPF0346 family.

In Ligilactobacillus salivarius (strain UCC118) (Lactobacillus salivarius), this protein is UPF0346 protein LSL_0716.